The primary structure comprises 473 residues: Photosystem II CP43 reaction center protein (473 aa).

Positions 1-14 (MKTLYSLRRFYHVE) are excised as a propeptide. Threonine 15 bears the N-acetylthreonine mark. Phosphothreonine is present on threonine 15. Helical transmembrane passes span 69-93 (LFEV…PHLA), 134-155 (LLGP…KDRN), 178-200 (KALY…RKIT), 255-275 (KPFA…LSYS), and 291-312 (WFNN…ASQA). Residue glutamate 367 participates in [CaMn4O5] cluster binding. Residues 447 to 471 (RARAAAAGFEKGIDRDFEPVLSMTP) traverse the membrane as a helical segment.

The protein belongs to the PsbB/PsbC family. PsbC subfamily. PSII is composed of 1 copy each of membrane proteins PsbA, PsbB, PsbC, PsbD, PsbE, PsbF, PsbH, PsbI, PsbJ, PsbK, PsbL, PsbM, PsbT, PsbX, PsbY, PsbZ, Psb30/Ycf12, at least 3 peripheral proteins of the oxygen-evolving complex and a large number of cofactors. It forms dimeric complexes. Requires Binds multiple chlorophylls and provides some of the ligands for the Ca-4Mn-5O cluster of the oxygen-evolving complex. It may also provide a ligand for a Cl- that is required for oxygen evolution. PSII binds additional chlorophylls, carotenoids and specific lipids. as cofactor.

It localises to the plastid. It is found in the chloroplast thylakoid membrane. In terms of biological role, one of the components of the core complex of photosystem II (PSII). It binds chlorophyll and helps catalyze the primary light-induced photochemical processes of PSII. PSII is a light-driven water:plastoquinone oxidoreductase, using light energy to abstract electrons from H(2)O, generating O(2) and a proton gradient subsequently used for ATP formation. The polypeptide is Photosystem II CP43 reaction center protein (Coffea arabica (Arabian coffee)).